We begin with the raw amino-acid sequence, 298 residues long: Tyrosine recombinase XerC (298 aa).

Positions 2 to 88 (TDLHTDVERY…ALRSFFDWLV (87 aa)) constitute a Core-binding (CB) domain. The region spanning 109-288 (HLPKNIDVDD…DFQHLASVYD (180 aa)) is the Tyr recombinase domain. Residues R148, K172, H240, R243, and H266 contribute to the active site. The O-(3'-phospho-DNA)-tyrosine intermediate role is filled by Y275.

Belongs to the 'phage' integrase family. XerC subfamily. As to quaternary structure, forms a cyclic heterotetrameric complex composed of two molecules of XerC and two molecules of XerD, in which XerC interacts with XerD via its C-terminal region, XerD interacts with XerC via its C-terminal region and so on.

Its subcellular location is the cytoplasm. Its activity is regulated as follows. FtsK may regulate the catalytic switch between XerC and XerD in the heterotetrameric complex during the two steps of the recombination process. In terms of biological role, site-specific tyrosine recombinase, which acts by catalyzing the cutting and rejoining of the recombining DNA molecules. Binds cooperatively to specific DNA consensus sequences that are separated from XerD binding sites by a short central region, forming the heterotetrameric XerC-XerD complex that recombines DNA substrates. The complex is essential to convert dimers of the bacterial chromosome into monomers to permit their segregation at cell division. It also contributes to the segregational stability of plasmids. In the complex XerC specifically exchanges the top DNA strands. The chain is Tyrosine recombinase XerC from Shigella dysenteriae serotype 1 (strain Sd197).